Here is a 146-residue protein sequence, read N- to C-terminus: Hemoglobin subunit beta (146 aa).

At valine 1 the chain carries N-acetylvaline. A Globin domain is found at 2–146 (HLTADEKTAV…VANALAHKYH (145 aa)). Residue threonine 12 is modified to Phosphothreonine. Serine 44 is subject to Phosphoserine. Lysine 59 is subject to N6-acetyllysine. Position 63 (histidine 63) interacts with heme b. Lysine 82 is modified (N6-acetyllysine). Histidine 92 lines the heme b pocket. Cysteine 93 is modified (S-nitrosocysteine). At lysine 144 the chain carries N6-acetyllysine.

This sequence belongs to the globin family. In terms of assembly, heterotetramer of two alpha chains and two beta chains. In terms of tissue distribution, red blood cells.

Functionally, involved in oxygen transport from the lung to the various peripheral tissues. This chain is Hemoglobin subunit beta (HBB), found in Procyon lotor (Raccoon).